The primary structure comprises 306 residues: UDP-3-O-acyl-N-acetylglucosamine deacetylase (306 aa).

Residues His79, His238, and Asp242 each coordinate Zn(2+). His265 functions as the Proton donor in the catalytic mechanism.

It belongs to the LpxC family. The cofactor is Zn(2+).

It catalyses the reaction a UDP-3-O-[(3R)-3-hydroxyacyl]-N-acetyl-alpha-D-glucosamine + H2O = a UDP-3-O-[(3R)-3-hydroxyacyl]-alpha-D-glucosamine + acetate. It functions in the pathway glycolipid biosynthesis; lipid IV(A) biosynthesis; lipid IV(A) from (3R)-3-hydroxytetradecanoyl-[acyl-carrier-protein] and UDP-N-acetyl-alpha-D-glucosamine: step 2/6. Its function is as follows. Catalyzes the hydrolysis of UDP-3-O-myristoyl-N-acetylglucosamine to form UDP-3-O-myristoylglucosamine and acetate, the committed step in lipid A biosynthesis. The polypeptide is UDP-3-O-acyl-N-acetylglucosamine deacetylase (Shewanella loihica (strain ATCC BAA-1088 / PV-4)).